A 258-amino-acid polypeptide reads, in one-letter code: Capsid protein (258 aa).

The short motif at 3 to 20 is the Bipartite nuclear localization signal element; the sequence is KRPGDIIISTPGSKVRRR. A Nuclear localization signal motif is present at residues 41–55; sequence RKRAWVNRPMYRKPT. A zinc finger spans residues 69–86; that stretch reads CEGPCKVQSFEQRDDVKH. A Nuclear export signal motif is present at residues 102–123; sequence LTHRVGKRFCIKSIYILGKIWL. A Bipartite nuclear localization signal motif is present at residues 202 to 249; sequence KRFYRLNHHVTYNHQEAGKYENHTENALLLYMACTHASNPVYATLKIR.

This sequence belongs to the geminiviridae capsid protein family. Homomultimer. Binds to single-stranded and double-stranded viral DNA. Interacts (via nuclear localization signals) with host importin alpha-1a.

Its subcellular location is the virion. The protein localises to the host nucleus. In terms of biological role, encapsidates the viral DNA into characteristic twinned ('geminate') particles. Binds the genomic viral ssDNA and shuttles it into and out of the cell nucleus. The CP of bipartite geminiviruses is not required for cell-to-cell or systemic movement. The protein is Capsid protein of African cassava mosaic virus (isolate West Kenyan 844) (ACMV).